The chain runs to 554 residues: Phenylalanine--tRNA ligase beta subunit (554 aa).

The B5 domain maps to 276-351 (LSLKSRMISV…INYGYEKFEG (76 aa)). The Mg(2+) site is built by D329, D335, E338, and E339.

The protein belongs to the phenylalanyl-tRNA synthetase beta subunit family. Type 2 subfamily. In terms of assembly, tetramer of two alpha and two beta subunits. It depends on Mg(2+) as a cofactor.

The protein localises to the cytoplasm. It catalyses the reaction tRNA(Phe) + L-phenylalanine + ATP = L-phenylalanyl-tRNA(Phe) + AMP + diphosphate + H(+). The protein is Phenylalanine--tRNA ligase beta subunit of Methanococcus maripaludis (strain C5 / ATCC BAA-1333).